The sequence spans 483 residues: Proline--tRNA ligase (483 aa).

It belongs to the class-II aminoacyl-tRNA synthetase family. ProS type 3 subfamily. As to quaternary structure, homodimer.

It is found in the cytoplasm. It carries out the reaction tRNA(Pro) + L-proline + ATP = L-prolyl-tRNA(Pro) + AMP + diphosphate. Functionally, catalyzes the attachment of proline to tRNA(Pro) in a two-step reaction: proline is first activated by ATP to form Pro-AMP and then transferred to the acceptor end of tRNA(Pro). The chain is Proline--tRNA ligase from Sulfurisphaera tokodaii (strain DSM 16993 / JCM 10545 / NBRC 100140 / 7) (Sulfolobus tokodaii).